Here is a 123-residue protein sequence, read N- to C-terminus: Protein HesB, heterocyst (123 aa).

It belongs to the HesB/IscA family.

Its function is as follows. May be required for efficient nitrogen fixation. The chain is Protein HesB, heterocyst (hesB1) from Trichormus variabilis (strain ATCC 29413 / PCC 7937) (Anabaena variabilis).